The sequence spans 447 residues: Glutamyl-tRNA reductase (447 aa).

Substrate-binding positions include 45–48 (TCNR), S111, 116–118 (ETE), and Q122. C46 acts as the Nucleophile in catalysis. 191 to 196 (GTGKYA) provides a ligand contact to NADP(+).

Belongs to the glutamyl-tRNA reductase family. As to quaternary structure, homodimer.

It carries out the reaction (S)-4-amino-5-oxopentanoate + tRNA(Glu) + NADP(+) = L-glutamyl-tRNA(Glu) + NADPH + H(+). It participates in porphyrin-containing compound metabolism; protoporphyrin-IX biosynthesis; 5-aminolevulinate from L-glutamyl-tRNA(Glu): step 1/2. Functionally, catalyzes the NADPH-dependent reduction of glutamyl-tRNA(Glu) to glutamate 1-semialdehyde (GSA). This chain is Glutamyl-tRNA reductase, found in Tropheryma whipplei (strain Twist) (Whipple's bacillus).